Reading from the N-terminus, the 252-residue chain is 3-dehydroquinate dehydratase (252 aa).

3-dehydroquinate-binding positions include S21, 46-48 (EWR), and R82. Residue H143 is the Proton donor/acceptor of the active site. K170 functions as the Schiff-base intermediate with substrate in the catalytic mechanism. Residues R213, S232, and Q236 each coordinate 3-dehydroquinate.

This sequence belongs to the type-I 3-dehydroquinase family. Homodimer.

It catalyses the reaction 3-dehydroquinate = 3-dehydroshikimate + H2O. Its pathway is metabolic intermediate biosynthesis; chorismate biosynthesis; chorismate from D-erythrose 4-phosphate and phosphoenolpyruvate: step 3/7. Involved in the third step of the chorismate pathway, which leads to the biosynthesis of aromatic amino acids. Catalyzes the cis-dehydration of 3-dehydroquinate (DHQ) and introduces the first double bond of the aromatic ring to yield 3-dehydroshikimate. The protein is 3-dehydroquinate dehydratase of Escherichia coli O17:K52:H18 (strain UMN026 / ExPEC).